We begin with the raw amino-acid sequence, 185 residues long: Ribosome-recycling factor (185 aa).

It belongs to the RRF family.

The protein localises to the cytoplasm. Functionally, responsible for the release of ribosomes from messenger RNA at the termination of protein biosynthesis. May increase the efficiency of translation by recycling ribosomes from one round of translation to another. The polypeptide is Ribosome-recycling factor (Aeromonas salmonicida (strain A449)).